The following is a 623-amino-acid chain: 1-butanol dehydrogenase (quinone) (623 aa).

The N-terminal stretch at 1–28 (MKKSHAKPFALRAIVVATAAALSLPAAA) is a signal peptide. Positions 40, 43, and 46 each coordinate Ca(2+). E90 contributes to the pyrroloquinoline quinone binding site. C134 and C135 are oxidised to a cystine. Pyrroloquinoline quinone-binding positions include R140, T184, and 202–204 (HGS). E208 serves as a coordination point for Ca(2+). Residues 235 to 274 (HMGRLNGKDSTPTGDPKAPSWPDDPNSPTGKVEAWSQGGG) are disordered. Ca(2+) contacts are provided by N295 and D345. Catalysis depends on D345, which acts as the Proton acceptor. R374 is a pyrroloquinoline quinone binding site. Positions 420–440 (GKPIEKDNRPPQPKEGADKGE) are disordered. Residue A592 participates in pyrroloquinoline quinone binding.

This sequence belongs to the bacterial PQQ dehydrogenase family. Pyrroloquinoline quinone is required as a cofactor. Ca(2+) serves as cofactor.

The protein resides in the periplasm. It carries out the reaction butan-1-ol + a quinone = butanal + a quinol. In terms of biological role, involved in the metabolism of butane. May function primarily in energy generation. Catalyzes the oxidation of 1-butanol to 1-butanal. Also able to use 2-butanol and butyraldehyde, although the affinity is comparatively low. This Thauera butanivorans (strain ATCC 43655 / DSM 2080 / JCM 20651 / CCUG 51053 / NBRC 103042 / IAM 12574 / Bu B1211) (Pseudomonas butanovora) protein is 1-butanol dehydrogenase (quinone).